A 395-amino-acid polypeptide reads, in one-letter code: Succinyl-diaminopimelate desuccinylase 2 (395 aa).

A Zn(2+)-binding site is contributed by H79. D81 is a catalytic residue. Residue D112 coordinates Zn(2+). E145 acts as the Proton acceptor in catalysis. The Zn(2+) site is built by E146, E174, and H363.

This sequence belongs to the peptidase M20A family. DapE subfamily. In terms of assembly, homodimer. It depends on Zn(2+) as a cofactor. Co(2+) serves as cofactor.

The enzyme catalyses N-succinyl-(2S,6S)-2,6-diaminopimelate + H2O = (2S,6S)-2,6-diaminopimelate + succinate. Its pathway is amino-acid biosynthesis; L-lysine biosynthesis via DAP pathway; LL-2,6-diaminopimelate from (S)-tetrahydrodipicolinate (succinylase route): step 3/3. In terms of biological role, catalyzes the hydrolysis of N-succinyl-L,L-diaminopimelic acid (SDAP), forming succinate and LL-2,6-diaminopimelate (DAP), an intermediate involved in the bacterial biosynthesis of lysine and meso-diaminopimelic acid, an essential component of bacterial cell walls. The chain is Succinyl-diaminopimelate desuccinylase 2 from Ruegeria sp. (strain TM1040) (Silicibacter sp.).